The chain runs to 224 residues: Cytidylate kinase (224 aa).

11–19 is a binding site for ATP; it reads GPAAAGKST.

This sequence belongs to the cytidylate kinase family. Type 1 subfamily.

It is found in the cytoplasm. The catalysed reaction is CMP + ATP = CDP + ADP. The enzyme catalyses dCMP + ATP = dCDP + ADP. In Listeria monocytogenes serotype 4b (strain CLIP80459), this protein is Cytidylate kinase.